A 527-amino-acid polypeptide reads, in one-letter code: Bacillolysin (527 aa).

The signal sequence occupies residues 1–28 (MKKSYLATSLTLSIAVGVSGFTSVPAFA). The propeptide at 29 to 223 (KTKIDYHKQW…VINKYNMLDH (195 aa)) is activation peptide. Positions 276, 278, and 354 each coordinate Ca(2+). His358 contacts Zn(2+). Glu359 is an active-site residue. The Zn(2+) site is built by His362 and Glu382. Residues Asp393, Asn394, Asp396, Glu401, Tyr404, Thr405, and Asp411 each contribute to the Ca(2+) site. Catalysis depends on His442, which acts as the Proton donor.

This sequence belongs to the peptidase M4 family. It depends on Ca(2+) as a cofactor. Requires Zn(2+) as cofactor.

The protein resides in the secreted. The enzyme catalyses Similar, but not identical, to that of thermolysin.. In terms of biological role, extracellular zinc metalloprotease. This Brevibacillus brevis (Bacillus brevis) protein is Bacillolysin (npr).